The chain runs to 455 residues: Probable ATP-dependent RNA helicase DDX47 (455 aa).

The segment at 1-21 (MAADEEPDSPSGALQTAAEEE) is disordered. A2 is modified (N-acetylalanine). A Phosphoserine modification is found at S9. The Q motif signature appears at 24–52 (KTFKDLGVTDVLCEACDQLGWAKPTKIQI). Residues 55-226 (IPLALQGRDI…RAALKNPVKC (172 aa)) enclose the Helicase ATP-binding domain. 68–75 (AETGSGKT) is an ATP binding site. T149 carries the post-translational modification Phosphothreonine. The short motif at 174 to 177 (DEAD) is the DEAD box element. Residues 237 to 397 (KLQQYYLFIP…VFPTQDEEVM (161 aa)) enclose the Helicase C-terminal domain. A disordered region spans residues 412 to 455 (MELREHGEKKKRKREDAGDDDDKEGAIGVRNKVAGGKMKKRKGR).

The protein belongs to the DEAD box helicase family. DDX47/RRP3 subfamily. In terms of assembly, interacts with AGO1 and AGO2. Interacts with GABARAP. Interacts with NOL8; the interaction is RNA-dependent.

It localises to the nucleus. The protein resides in the nucleolus. It carries out the reaction ATP + H2O = ADP + phosphate + H(+). Its function is as follows. Involved in apoptosis. May have a role in rRNA processing and mRNA splicing. Associates with pre-rRNA precursors. This Mus musculus (Mouse) protein is Probable ATP-dependent RNA helicase DDX47 (Ddx47).